The following is a 117-amino-acid chain: UPF0122 protein Teth514_1714 (117 aa).

It belongs to the UPF0122 family.

In terms of biological role, might take part in the signal recognition particle (SRP) pathway. This is inferred from the conservation of its genetic proximity to ftsY/ffh. May be a regulatory protein. In Thermoanaerobacter sp. (strain X514), this protein is UPF0122 protein Teth514_1714.